Consider the following 290-residue polypeptide: UPF0750 membrane protein YpjC (290 aa).

Transmembrane regions (helical) follow at residues 9–29 (NIFFILIGAAIFSFGLVHFNM), 47–67 (ALFHISPSISNLVLNIPIFFI), 75–95 (TMFVYTLVGTVALSLFLSIFQ), 106–126 (DLALAALFAGVFIGAGLGIIF), 146–166 (FGIPMGRTMFAFDACVIILSL), and 179–199 (LVAVFVAARLIDFIQEGGYAA).

It belongs to the UPF0750 family.

It is found in the cell membrane. This chain is UPF0750 membrane protein YpjC (ypjC), found in Bacillus subtilis (strain 168).